Here is a 208-residue protein sequence, read N- to C-terminus: GTP cyclohydrolase 1 (208 aa).

3 residues coordinate Zn(2+): Cys98, His101, and Cys169.

It belongs to the GTP cyclohydrolase I family. In terms of assembly, toroid-shaped homodecamer, composed of two pentamers of five dimers.

The catalysed reaction is GTP + H2O = 7,8-dihydroneopterin 3'-triphosphate + formate + H(+). The protein operates within cofactor biosynthesis; 7,8-dihydroneopterin triphosphate biosynthesis; 7,8-dihydroneopterin triphosphate from GTP: step 1/1. The sequence is that of GTP cyclohydrolase 1 from Agrobacterium fabrum (strain C58 / ATCC 33970) (Agrobacterium tumefaciens (strain C58)).